The chain runs to 204 residues: Holliday junction branch migration complex subunit RuvA (204 aa).

Residues 1 to 64 form a domain I region; it reads MIAKLTGILD…ETDQRLIGFT (64 aa). Residues 65–143 are domain II; sequence SAGERAWFRL…GLAGYASPVG (79 aa). The tract at residues 144-154 is flexible linker; that stretch reads PGGEAFVAPPG. Residues 154–204 are domain III; it reads GNASADAVSALQNLGFKPAVASSAVAAAVKELGEDAGLNDLVRVALKRAAG.

Belongs to the RuvA family. In terms of assembly, homotetramer. Forms an RuvA(8)-RuvB(12)-Holliday junction (HJ) complex. HJ DNA is sandwiched between 2 RuvA tetramers; dsDNA enters through RuvA and exits via RuvB. An RuvB hexamer assembles on each DNA strand where it exits the tetramer. Each RuvB hexamer is contacted by two RuvA subunits (via domain III) on 2 adjacent RuvB subunits; this complex drives branch migration. In the full resolvosome a probable DNA-RuvA(4)-RuvB(12)-RuvC(2) complex forms which resolves the HJ.

It is found in the cytoplasm. Its function is as follows. The RuvA-RuvB-RuvC complex processes Holliday junction (HJ) DNA during genetic recombination and DNA repair, while the RuvA-RuvB complex plays an important role in the rescue of blocked DNA replication forks via replication fork reversal (RFR). RuvA specifically binds to HJ cruciform DNA, conferring on it an open structure. The RuvB hexamer acts as an ATP-dependent pump, pulling dsDNA into and through the RuvAB complex. HJ branch migration allows RuvC to scan DNA until it finds its consensus sequence, where it cleaves and resolves the cruciform DNA. The sequence is that of Holliday junction branch migration complex subunit RuvA from Novosphingobium aromaticivorans (strain ATCC 700278 / DSM 12444 / CCUG 56034 / CIP 105152 / NBRC 16084 / F199).